Here is a 305-residue protein sequence, read N- to C-terminus: External core antigen (305 aa).

Positions 1–19 (MWSLRLHPSPFGAACQGIF) are cleaved as a signal peptide. A disordered region spans residues 226 to 305 (APTIEAITRP…NQTRSPSPRE (80 aa)). Positions 248–279 (GTRKPRGLEPRRRKVKTTVVYGRRRSKSRGRR) are enriched in basic residues. A propeptide spanning residues 273-305 (SKSRGRRSSPSQRAGSPLPRNRGNQTRSPSPRE) is cleaved from the precursor. The segment covering 294-305 (RGNQTRSPSPRE) has biased composition (polar residues).

It belongs to the avihepadnavirus precore antigen family. Homodimerizes.

It is found in the secreted. Its function is as follows. May regulate immune response to the intracellular capsid in acting as a T-cell tolerogen, by having an immunoregulatory effect which prevents destruction of infected cells by cytotoxic T-cells. The sequence is that of External core antigen (C) from Heron hepatitis B virus (HHBV).